The primary structure comprises 259 residues: MAVDREECVYMAKLAEQAERYDEMVEEMKKVAKLVHDQELSVEERNLLSVAYKNVIGARRASWRIISSIEQKEEAKGNEEHVQRIRKYRTVVEEELSKICASILQLLDDHLIPTASTGESKVFYLKMKGDYHRYLAEFKTGADRKEAAEHTLLAYKAAQDIALVDLPPTHPIRLGLALNFSVFYYEILNSPERACHLAKQAFDEAIAELDSLGEESYKDSTLIMQLLRDNLTLWTSDMQDPAAGDDREGADMKVEDAEP.

Residues 238-259 form a disordered region; that stretch reads MQDPAAGDDREGADMKVEDAEP. Over residues 244 to 259 the composition is skewed to basic and acidic residues; the sequence is GDDREGADMKVEDAEP.

It belongs to the 14-3-3 family.

This Chlamydomonas reinhardtii (Chlamydomonas smithii) protein is 14-3-3-like protein.